The following is a 258-amino-acid chain: Aquaglyceroporin (258 aa).

At 1–11 (MHMLFYKSYVR) the chain is on the cytoplasmic side. The chain crosses the membrane as a helical span at residues 12–32 (EFIGEFLGTFVLMFLGEGATA). Residues 33–45 (NFHTTGLSGDWYK) are Extracellular-facing. A helical transmembrane segment spans residues 46–66 (LCLGWGLAVFFGILVSAKLSG). Glycerol-binding residues include glycine 66, alanine 67, and asparagine 70. The Cytoplasmic portion of the chain corresponds to 67–87 (AHLNLAVSIGLSSINKFDLKK). The chain crosses the membrane as a helical span at residues 88–108 (IPVYFFAQLLGAFVGTSTVYG). The Extracellular segment spans residues 109–135 (LYHGFISNSKIPQFAWETSRNPSISLT). Serine 127 contacts glycerol. Residues 136 to 156 (GAFFNELILTGILLLVILVVV) form a helical membrane-spanning segment. Over 157-171 (DENICGKFHILKLSS) the chain is Cytoplasmic. Residues 172-192 (VVGLIILCIGITFGGNTGFAL) form a helical membrane-spanning segment. The glycerol site is built by glycine 189, phenylalanine 190, asparagine 193, and arginine 196. Residues 193–217 (NPSRDLGSRFLSLIAYGKDTFTKDN) lie on the Extracellular side of the membrane. Residues 218–238 (FYFWVPLVAPCVGSVVFCQFY) traverse the membrane as a helical segment. The Cytoplasmic segment spans residues 239 to 258 (DKVICPLVDLANNEKDGVDL).

This sequence belongs to the MIP/aquaporin (TC 1.A.8) family. Homotetramer.

The protein localises to the cell membrane. The enzyme catalyses H2O(in) = H2O(out). The catalysed reaction is glycerol(in) = glycerol(out). It carries out the reaction urea(in) = urea(out). It catalyses the reaction NH4(+)(in) = NH4(+)(out). The enzyme catalyses methylamine(out) = methylamine(in). The catalysed reaction is formamide(out) = formamide(in). In terms of biological role, mediates water and glycerol transport across the cell membrane. Permeable to sugar alcohols of up to five carbons and urea. Permeable to ammonia, methylamine and formamide. The chain is Aquaglyceroporin from Plasmodium falciparum (isolate 3D7).